Consider the following 427-residue polypeptide: Sialic acid TRAP transporter large permease protein SiaM (427 aa).

Helical transmembrane passes span 11–31, 52–72, 82–102, 140–160, 165–185, 214–234, 246–266, 270–290, 301–321, 322–342, 348–368, and 394–414; these read LLFA…AFLI, FTLL…SAGI, SLVG…SLLF, ASCI…YGVV, IGAL…ALMV, AFLS…GKFT, ALFL…IEIL, VNTT…GWIV, DYFL…NLLL, LFLG…PFLV, VGID…IGIL, and VLPL…FPQF.

The protein belongs to the TRAP transporter large permease family. The complex comprises the extracytoplasmic solute receptor protein SiaP, and the two transmembrane proteins SiaQ and SiaM. SiaQ and SiaM form a tight 1:1 complex.

It is found in the cell inner membrane. Its function is as follows. Part of the tripartite ATP-independent periplasmic (TRAP) transport system SiaPQM that catalyzes unidirectional Na(+)-dependent sialic acid uptake. This chain is Sialic acid TRAP transporter large permease protein SiaM, found in Vibrio cholerae serotype O1 (strain ATCC 39315 / El Tor Inaba N16961).